The following is an 883-amino-acid chain: Glutamate receptor 2 (883 aa).

A signal peptide spans 1 to 24 (MQKIMHISVLLSPVLWGLIFGVSS). At 25-543 (NSIQIGGLFP…GVFSFLDPLA (519 aa)) the chain is on the extracellular side. A disulfide bond links Cys78 and Cys330. N-linked (GlcNAc...) asparagine glycosylation is found at Asn256, Asn370, Asn406, and Asn413. The L-glutamate site is built by Pro499, Thr501, and Arg506. Residues 544–564 (YEIWMCIVFAYIGVSVVLFLV) form a helical membrane-spanning segment. Topologically, residues 565-591 (SRFSPYEWHTEEFEDGRETQSSESTNE) are cytoplasmic. An intramembrane region (helical; Pore-forming) is located at residues 592 to 607 (FGIFNSLWFSLGAFMQ). The stretch at 608-610 (QGC) is an intramembrane region. The S-palmitoyl cysteine moiety is linked to residue Cys610. The Cytoplasmic portion of the chain corresponds to 611–616 (DISPRS). Residues 617–637 (LSGRIVGGVWWFFTLIIISSY) traverse the membrane as a helical segment. The Extracellular segment spans residues 638–812 (TANLAAFLTV…EKTSALSLSN (175 aa)). L-glutamate contacts are provided by Ser675 and Thr676. Ser683 carries the phosphoserine; by PKC modification. Ser717 is subject to Phosphoserine; by PKG. Residue Glu726 participates in L-glutamate binding. The cysteines at positions 739 and 794 are disulfide-linked. A helical transmembrane segment spans residues 813-833 (VAGVFYILVGGLGLAMLVALI). Residues 834-883 (EFCYKSRAEAKRMKVAKNAQNINPSSSQNSQNFATYKEGYNVYGIESVKI) lie on the Cytoplasmic side of the membrane. A lipid anchor (S-palmitoyl cysteine) is attached at Cys836. 2 positions are modified to phosphoserine: Ser860 and Ser863. The tract at residues 867-877 (ATYKEGYNVYG) is required for interaction with IQSEC1. Tyr876 carries the phosphotyrosine modification. A Phosphoserine modification is found at Ser880.

It belongs to the glutamate-gated ion channel (TC 1.A.10.1) family. GRIA2 subfamily. As to quaternary structure, homotetramer or heterotetramer of pore-forming glutamate receptor subunits. Tetramers may be formed by the dimerization of dimers. May interact with MPP4. Forms a ternary complex with GRIP1 and CSPG4. Interacts with ATAD1 in an ATP-dependent manner. ATAD1-catalyzed ATP hydrolysis disrupts binding to ATAD1 and to GRIP1 and leads to AMPAR complex disassembly. Interacts with GRIP1 and GRIP2. Interacts with NSF via its C-terminus. Isoform 1, but not isoform 3, interacts with PICK1. Interacts with CACNG2. Interacts with GRIA1 and SYNDIG1. Part of a complex containing GRIA2, NSF and NAPA and/or NAPB. Interacts with SNX27 (via PDZ domain); the interaction is required for recycling to the plasma membrane when endocytosed and prevent degradation in lysosomes. Interacts with LRFN1. Found in a complex with GRIA1, GRIA3, GRIA4, CNIH2, CNIH3, CACNG2, CACNG3, CACNG4, CACNG5, CACNG7 and CACNG8. Interacts with CACNG5. Interacts with OLFM2. Interacts with AP4B1, AP4E1 and AP4M1; probably indirect it mediates the somatodendritic localization of GRIA2 in neurons. Forms a complex with GRIP1, NSG1 and STX12; controls the intracellular fate of AMPAR and the endosomal sorting of the GRIA2 subunit toward recycling and membrane targeting. Interacts with IQSEC1; the interaction is required for ARF6 activation. Interacts (heterotetramer form) with CNIH2 and CNIH3; this interaction promotes expression at the plasma membrane and extensively modulates their gating properties by slowing deactivation and desensitization kinetics. Post-translationally, palmitoylated. Depalmitoylated upon L-glutamate stimulation. Cys-610 palmitoylation leads to Golgi retention and decreased cell surface expression. In contrast, Cys-836 palmitoylation does not affect cell surface expression but regulates stimulation-dependent endocytosis. Ubiquitinated by RNF167, leading to its degradation. In terms of processing, phosphorylation at Tyr-876 is required for interaction with IQSEC1 and ARF6 activation, which in turn triggers AMPAR internalization for persistent synaptic depression. Post-translationally, N-glycosylated.

It localises to the cell membrane. It is found in the postsynaptic cell membrane. The protein localises to the postsynaptic density membrane. It carries out the reaction Ca(2+)(in) = Ca(2+)(out). The enzyme catalyses Na(+)(in) = Na(+)(out). Functionally, ionotropic glutamate receptor that functions as a ligand-gated cation channel, gated by L-glutamate and glutamatergic agonists such as alpha-amino-3-hydroxy-5-methyl-4-isoxazolepropionic acid (AMPA), quisqualic acid, and kainic acid. L-glutamate acts as an excitatory neurotransmitter at many synapses in the central nervous system and plays an important role in fast excitatory synaptic transmission. Binding of the excitatory neurotransmitter L-glutamate induces a conformation change, leading to the opening of the cation channel, and thereby converts the chemical signal to an electrical impulse upon entry of monovalent and divalent cations such as sodium and calcium. The receptor then desensitizes rapidly and enters in a transient inactive state, characterized by the presence of bound agonist. In the presence of CACNG4 or CACNG7 or CACNG8, shows resensitization which is characterized by a delayed accumulation of current flux upon continued application of L-glutamate. Through complex formation with NSG1, GRIP1 and STX12 controls the intracellular fate of AMPAR and the endosomal sorting of the GRIA2 subunit toward recycling and membrane targeting. This is Glutamate receptor 2 from Homo sapiens (Human).